Consider the following 393-residue polypeptide: S-adenosylmethionine synthase (393 aa).

Position 16 (H16) interacts with ATP. D18 serves as a coordination point for Mg(2+). E44 contributes to the K(+) binding site. 2 residues coordinate L-methionine: E57 and Q100. The flexible loop stretch occupies residues 100 to 110 (QSQDIAQGVDK). ATP is bound by residues 167 to 169 (DAK), 238 to 239 (RF), D247, 253 to 254 (RK), A270, and K274. D247 contributes to the L-methionine binding site. K278 provides a ligand contact to L-methionine.

The protein belongs to the AdoMet synthase family. In terms of assembly, homotetramer; dimer of dimers. The cofactor is Mg(2+). Requires K(+) as cofactor.

It localises to the cytoplasm. It catalyses the reaction L-methionine + ATP + H2O = S-adenosyl-L-methionine + phosphate + diphosphate. It functions in the pathway amino-acid biosynthesis; S-adenosyl-L-methionine biosynthesis; S-adenosyl-L-methionine from L-methionine: step 1/1. Catalyzes the formation of S-adenosylmethionine (AdoMet) from methionine and ATP. The overall synthetic reaction is composed of two sequential steps, AdoMet formation and the subsequent tripolyphosphate hydrolysis which occurs prior to release of AdoMet from the enzyme. This is S-adenosylmethionine synthase from Delftia acidovorans (strain DSM 14801 / SPH-1).